We begin with the raw amino-acid sequence, 489 residues long: FAD-containing monooxygenase EthA (489 aa).

Residues Ser15, Glu36, 44 to 47 (TWDL), Asp56, and Val104 each bind FAD. Position 54-56 (54-56 (RSD)) interacts with NADP(+). NADP(+) is bound by residues 183–189 (SGATAVT) and 207–208 (RS).

The protein belongs to the FAD-binding monooxygenase family. It depends on FAD as a cofactor.

It is found in the cell membrane. It catalyses the reaction ethionamide + NADPH + O2 + H(+) = ethionamide S-oxide + NADP(+) + H2O. Its function is as follows. Monooxygenase able to convert a wide range of ketones to the corresponding esters or lactones via a Baeyer-Villiger oxidation reaction. Can act on long-chain aliphatic ketones (2-hexanone to 2-dodecanone) and on aromatic ketones (phenylacetone and benzylacetone). Is also able to catalyze enantioselective sulfoxidation of methyl-p-tolylsulfide. In vivo, likely functions as a BVMO, but the exact nature of the physiological substrate(s) remains to be established. Is responsible for the activation of several thiocarbamide-containing pro-drugs, such as ethionamide (ETH), isoxyl (ISO) and thiacetazone (TAC), into reactive species. This Mycobacterium bovis (strain ATCC BAA-935 / AF2122/97) protein is FAD-containing monooxygenase EthA (ethA).